The sequence spans 361 residues: Spermidine/putrescine import ATP-binding protein PotA (361 aa).

The 231-residue stretch at 4 to 234 (LELRDVTRRF…PANRFIADFI (231 aa)) folds into the ABC transporter domain. Residue 36–43 (GPSGCGKT) participates in ATP binding.

Belongs to the ABC transporter superfamily. Spermidine/putrescine importer (TC 3.A.1.11.1) family. The complex is composed of two ATP-binding proteins (PotA), two transmembrane proteins (PotB and PotC) and a solute-binding protein (PotD).

It is found in the cell inner membrane. It catalyses the reaction ATP + H2O + polyamine-[polyamine-binding protein]Side 1 = ADP + phosphate + polyamineSide 2 + [polyamine-binding protein]Side 1.. Functionally, part of the ABC transporter complex PotABCD involved in spermidine/putrescine import. Responsible for energy coupling to the transport system. The chain is Spermidine/putrescine import ATP-binding protein PotA from Nitrosomonas europaea (strain ATCC 19718 / CIP 103999 / KCTC 2705 / NBRC 14298).